The following is an 85-amino-acid chain: Cell division topological specificity factor (85 aa).

The protein belongs to the MinE family.

Its function is as follows. Prevents the cell division inhibition by proteins MinC and MinD at internal division sites while permitting inhibition at polar sites. This ensures cell division at the proper site by restricting the formation of a division septum at the midpoint of the long axis of the cell. The protein is Cell division topological specificity factor of Chromobacterium violaceum (strain ATCC 12472 / DSM 30191 / JCM 1249 / CCUG 213 / NBRC 12614 / NCIMB 9131 / NCTC 9757 / MK).